Consider the following 100-residue polypeptide: uncharacterized protein (100 aa).

This is an uncharacterized protein from Caenorhabditis elegans.